The sequence spans 299 residues: Protoheme IX farnesyltransferase (299 aa).

Helical transmembrane passes span 27–47 (VVALMLLTSVVGMSLAPHEHF), 53–73 (LIALVGIALMAGSAAAFNHLI), 97–117 (FNVLLFALLIGSLGFLSLMLW), 121–141 (LTAYLTFASLLGYAVVYTLYL), 149–169 (IVIAGIAGAMPPLLGWTSITG), 175–195 (AWLLVMIIFIWTPPHFWALAI), 222–242 (ILLYAILLALVCMLPVLVGMA), 244–264 (YLYLFSALVLNVCFVRYAIKL), and 273–293 (AIEMFRFSIYFLLLLFCALLL).

Belongs to the UbiA prenyltransferase family. Protoheme IX farnesyltransferase subfamily.

The protein localises to the cell inner membrane. It catalyses the reaction heme b + (2E,6E)-farnesyl diphosphate + H2O = Fe(II)-heme o + diphosphate. The protein operates within porphyrin-containing compound metabolism; heme O biosynthesis; heme O from protoheme: step 1/1. In terms of biological role, converts heme B (protoheme IX) to heme O by substitution of the vinyl group on carbon 2 of heme B porphyrin ring with a hydroxyethyl farnesyl side group. This is Protoheme IX farnesyltransferase from Vibrio vulnificus (strain YJ016).